A 111-amino-acid polypeptide reads, in one-letter code: Large ribosomal subunit protein eL34B (111 aa).

Tyr-76 carries the phosphotyrosine modification.

Belongs to the eukaryotic ribosomal protein eL34 family. Component of the large ribosomal subunit (LSU). Mature yeast ribosomes consist of a small (40S) and a large (60S) subunit. The 40S small subunit contains 1 molecule of ribosomal RNA (18S rRNA) and at least 33 different proteins. The large 60S subunit contains 3 rRNA molecules (25S, 5.8S and 5S rRNA) and at least 46 different proteins.

The protein localises to the cytoplasm. The protein resides in the nucleus. It is found in the nucleolus. In terms of biological role, component of the ribosome, a large ribonucleoprotein complex responsible for the synthesis of proteins in the cell. The small ribosomal subunit (SSU) binds messenger RNAs (mRNAs) and translates the encoded message by selecting cognate aminoacyl-transfer RNA (tRNA) molecules. The large subunit (LSU) contains the ribosomal catalytic site termed the peptidyl transferase center (PTC), which catalyzes the formation of peptide bonds, thereby polymerizing the amino acids delivered by tRNAs into a polypeptide chain. The nascent polypeptides leave the ribosome through a tunnel in the LSU and interact with protein factors that function in enzymatic processing, targeting, and the membrane insertion of nascent chains at the exit of the ribosomal tunnel. The polypeptide is Large ribosomal subunit protein eL34B (rpl3402) (Schizosaccharomyces pombe (strain 972 / ATCC 24843) (Fission yeast)).